Here is a 460-residue protein sequence, read N- to C-terminus: MLFNKDKNNIGGRSIESTGFAWWSGNARLINLSGKLLGAHVAHAGLIVFWTGAMTLFETSHFIPEKPLYEQGMILLPHLATLGWGVAPGGEIVNTYPYFATGVIHLVSSAVLGFGGIYHSIVGPDVLEDSFSFFGYDWRDKNKMTTILGIHLILLGIGAFLLVIKALFIGGIYDTWAPGGGDIRFITNPTLNPAIIFSYLLKSPFGGEGWIVGVNNMEDVIGGHIWIGVTCVIGGIWHILTRPFSWARRAFVWSGEAYLSYSLGALALMGQTAAEYAWYNNTVYPSEFYGPTAAEASQAQAFTFLVRDQRLGANIASTQGPTGLGKYLMRSPTGEVILGGETMRFWDLRAPWLEPLRSSNGLDLNKIKNDIQPWQERRAAEYMTHAPLGSLNSVGGVATEINSVNYVSPRSWLTTSHFFLGFFIFIGHLWHAGRARAAAAGFEKGINRENEPVLSMRPLD.

Met1 is a propeptide. Helical transmembrane passes span 56–80 (LFET…PHLA), 121–142 (IVGP…RDKN), 165–187 (KALF…RFIT), 242–262 (RPFS…LSYS), and 278–299 (WYNN…ASQA). Glu354 provides a ligand contact to [CaMn4O5] cluster. A helical membrane pass occupies residues 434-458 (RARAAAAGFEKGINRENEPVLSMRP).

Belongs to the PsbB/PsbC family. PsbC subfamily. In terms of assembly, PSII is composed of 1 copy each of membrane proteins PsbA, PsbB, PsbC, PsbD, PsbE, PsbF, PsbH, PsbI, PsbJ, PsbK, PsbL, PsbM, PsbT, PsbY, PsbZ, Psb30/Ycf12, at least 3 peripheral proteins of the oxygen-evolving complex and a large number of cofactors. It forms dimeric complexes. The cofactor is Binds multiple chlorophylls and provides some of the ligands for the Ca-4Mn-5O cluster of the oxygen-evolving complex. It may also provide a ligand for a Cl- that is required for oxygen evolution. PSII binds additional chlorophylls, carotenoids and specific lipids..

It is found in the plastid. Its subcellular location is the chloroplast thylakoid membrane. One of the components of the core complex of photosystem II (PSII). It binds chlorophyll and helps catalyze the primary light-induced photochemical processes of PSII. PSII is a light-driven water:plastoquinone oxidoreductase, using light energy to abstract electrons from H(2)O, generating O(2) and a proton gradient subsequently used for ATP formation. This chain is Photosystem II CP43 reaction center protein, found in Cyanidium caldarium (Red alga).